Here is a 358-residue protein sequence, read N- to C-terminus: Chorismate synthase (358 aa).

R46 and R52 together coordinate NADP(+). FMN-binding positions include 123–125 (RSS), 239–240 (NA), G283, 298–302 (KSVAT), and R324.

It belongs to the chorismate synthase family. As to quaternary structure, homotetramer. It depends on FMNH2 as a cofactor.

The catalysed reaction is 5-O-(1-carboxyvinyl)-3-phosphoshikimate = chorismate + phosphate. The protein operates within metabolic intermediate biosynthesis; chorismate biosynthesis; chorismate from D-erythrose 4-phosphate and phosphoenolpyruvate: step 7/7. In terms of biological role, catalyzes the anti-1,4-elimination of the C-3 phosphate and the C-6 proR hydrogen from 5-enolpyruvylshikimate-3-phosphate (EPSP) to yield chorismate, which is the branch point compound that serves as the starting substrate for the three terminal pathways of aromatic amino acid biosynthesis. This reaction introduces a second double bond into the aromatic ring system. The protein is Chorismate synthase of Parabacteroides distasonis (strain ATCC 8503 / DSM 20701 / CIP 104284 / JCM 5825 / NCTC 11152).